Consider the following 167-residue polypeptide: Small ribosomal subunit protein uS5 (167 aa).

One can recognise an S5 DRBM domain in the interval 11–74; that stretch reads LQEKLIAVNR…EKARRAMINV (64 aa).

The protein belongs to the universal ribosomal protein uS5 family. In terms of assembly, part of the 30S ribosomal subunit. Contacts proteins S4 and S8.

With S4 and S12 plays an important role in translational accuracy. Its function is as follows. Located at the back of the 30S subunit body where it stabilizes the conformation of the head with respect to the body. In Serratia proteamaculans (strain 568), this protein is Small ribosomal subunit protein uS5.